The primary structure comprises 283 residues: ATP phosphoribosyltransferase (283 aa).

The protein belongs to the ATP phosphoribosyltransferase family. Long subfamily. Mg(2+) serves as cofactor.

The protein localises to the cytoplasm. The catalysed reaction is 1-(5-phospho-beta-D-ribosyl)-ATP + diphosphate = 5-phospho-alpha-D-ribose 1-diphosphate + ATP. Its pathway is amino-acid biosynthesis; L-histidine biosynthesis; L-histidine from 5-phospho-alpha-D-ribose 1-diphosphate: step 1/9. Feedback inhibited by histidine. Functionally, catalyzes the condensation of ATP and 5-phosphoribose 1-diphosphate to form N'-(5'-phosphoribosyl)-ATP (PR-ATP). Has a crucial role in the pathway because the rate of histidine biosynthesis seems to be controlled primarily by regulation of HisG enzymatic activity. This Methanopyrus kandleri (strain AV19 / DSM 6324 / JCM 9639 / NBRC 100938) protein is ATP phosphoribosyltransferase.